The primary structure comprises 354 residues: Holliday junction branch migration complex subunit RuvB (354 aa).

The segment at 5 to 197 (TDDFSAADLP…FGIVARLEFY (193 aa)) is large ATPase domain (RuvB-L). ATP is bound by residues L36, R37, G78, K81, T82, T83, 144–146 (EDY), R187, Y197, and R234. T82 is a Mg(2+) binding site. The interval 198-268 (TAEELGRIVR…IANKALAMLD (71 aa)) is small ATPAse domain (RuvB-S). Residues 271–354 (PQGFDVMDRK…PPVSGNDMFT (84 aa)) are head domain (RuvB-H). The DNA site is built by R307, R326, and R331.

This sequence belongs to the RuvB family. In terms of assembly, homohexamer. Forms an RuvA(8)-RuvB(12)-Holliday junction (HJ) complex. HJ DNA is sandwiched between 2 RuvA tetramers; dsDNA enters through RuvA and exits via RuvB. An RuvB hexamer assembles on each DNA strand where it exits the tetramer. Each RuvB hexamer is contacted by two RuvA subunits (via domain III) on 2 adjacent RuvB subunits; this complex drives branch migration. In the full resolvosome a probable DNA-RuvA(4)-RuvB(12)-RuvC(2) complex forms which resolves the HJ.

It is found in the cytoplasm. It catalyses the reaction ATP + H2O = ADP + phosphate + H(+). Its function is as follows. The RuvA-RuvB-RuvC complex processes Holliday junction (HJ) DNA during genetic recombination and DNA repair, while the RuvA-RuvB complex plays an important role in the rescue of blocked DNA replication forks via replication fork reversal (RFR). RuvA specifically binds to HJ cruciform DNA, conferring on it an open structure. The RuvB hexamer acts as an ATP-dependent pump, pulling dsDNA into and through the RuvAB complex. RuvB forms 2 homohexamers on either side of HJ DNA bound by 1 or 2 RuvA tetramers; 4 subunits per hexamer contact DNA at a time. Coordinated motions by a converter formed by DNA-disengaged RuvB subunits stimulates ATP hydrolysis and nucleotide exchange. Immobilization of the converter enables RuvB to convert the ATP-contained energy into a lever motion, pulling 2 nucleotides of DNA out of the RuvA tetramer per ATP hydrolyzed, thus driving DNA branch migration. The RuvB motors rotate together with the DNA substrate, which together with the progressing nucleotide cycle form the mechanistic basis for DNA recombination by continuous HJ branch migration. Branch migration allows RuvC to scan DNA until it finds its consensus sequence, where it cleaves and resolves cruciform DNA. The protein is Holliday junction branch migration complex subunit RuvB of Polaromonas sp. (strain JS666 / ATCC BAA-500).